We begin with the raw amino-acid sequence, 77 residues long: Large ribosomal subunit protein eL20 (77 aa).

Belongs to the eukaryotic ribosomal protein eL20 family. In terms of assembly, part of the 50S ribosomal subunit. Binds 23S rRNA.

The chain is Large ribosomal subunit protein eL20 from Pyrococcus abyssi (strain GE5 / Orsay).